The following is a 192-amino-acid chain: Thymidylate kinase (192 aa).

7–14 is a binding site for ATP; it reads GIDCVGKS.

Belongs to the thymidylate kinase family.

The catalysed reaction is dTMP + ATP = dTDP + ADP. Phosphorylation of dTMP to form dTDP in both de novo and salvage pathways of dTTP synthesis. The polypeptide is Thymidylate kinase (Campylobacter jejuni subsp. jejuni serotype O:6 (strain 81116 / NCTC 11828)).